Reading from the N-terminus, the 562-residue chain is Sperm-tail PG-rich repeat-containing protein 2 (562 aa).

STPGR repeat units lie at residues 21–31 (GPGTYNINRSL), 60–73 (SPGPGQYNSDITRN), and 96–118 (PGPGAYNVTNDVSPARKIKAKSP). Disordered stretches follow at residues 114 to 136 (KAKSPKITSKAVRPSLSPAAPSI) and 192 to 215 (SGRREPLKGADEPGPGHYELQEDQ). Over residues 127–136 (PSLSPAAPSI) the composition is skewed to low complexity. Over residues 193 to 202 (GRREPLKGAD) the composition is skewed to basic and acidic residues. STPGR repeat units lie at residues 204-227 (PGPGHYELQEDQTVQYENVNVKRE), 253-271 (PGPGQYYIKSQFETSSNTH), 336-350 (TPGPGAYNMFGYGLA), 385-409 (TPGPTQYKVEKTNEALYKKQSTAAF), 425-462 (TPPPGSYNVSQSFEKTQCLHQYSKPRNENARKRQSCFL), and 478-492 (TPGPAYYSPDVKSSS). The tract at residues 543-562 (STRSLSSHRSWRKPTAHSSA) is disordered. The segment covering 551 to 562 (RSWRKPTAHSSA) has biased composition (basic residues).

The protein is Sperm-tail PG-rich repeat-containing protein 2 (stpg2) of Danio rerio (Zebrafish).